The sequence spans 259 residues: Ubiquinone/menaquinone biosynthesis C-methyltransferase UbiE (259 aa).

Residues Thr-82, Asp-103, 131 to 132 (NA), and Ser-148 contribute to the S-adenosyl-L-methionine site.

Belongs to the class I-like SAM-binding methyltransferase superfamily. MenG/UbiE family.

The catalysed reaction is a 2-demethylmenaquinol + S-adenosyl-L-methionine = a menaquinol + S-adenosyl-L-homocysteine + H(+). The enzyme catalyses a 2-methoxy-6-(all-trans-polyprenyl)benzene-1,4-diol + S-adenosyl-L-methionine = a 5-methoxy-2-methyl-3-(all-trans-polyprenyl)benzene-1,4-diol + S-adenosyl-L-homocysteine + H(+). Its pathway is quinol/quinone metabolism; menaquinone biosynthesis; menaquinol from 1,4-dihydroxy-2-naphthoate: step 2/2. It participates in cofactor biosynthesis; ubiquinone biosynthesis. In terms of biological role, methyltransferase required for the conversion of demethylmenaquinol (DMKH2) to menaquinol (MKH2) and the conversion of 2-polyprenyl-6-methoxy-1,4-benzoquinol (DDMQH2) to 2-polyprenyl-3-methyl-6-methoxy-1,4-benzoquinol (DMQH2). The polypeptide is Ubiquinone/menaquinone biosynthesis C-methyltransferase UbiE (Haemophilus ducreyi (strain 35000HP / ATCC 700724)).